Reading from the N-terminus, the 89-residue chain is Phosphocarrier protein HPr (89 aa).

The 88-residue stretch at 2-89 folds into the HPr domain; that stretch reads AKFSAIITDK…TMIDTALIQG (88 aa). Residue histidine 15 is the Pros-phosphohistidine intermediate of the active site. Serine 46 is modified (phosphoserine; by HPrK/P).

This sequence belongs to the HPr family.

It is found in the cytoplasm. With respect to regulation, phosphorylation on Ser-46 inhibits the phosphoryl transfer from enzyme I to HPr. Functionally, general (non sugar-specific) component of the phosphoenolpyruvate-dependent sugar phosphotransferase system (sugar PTS). This major carbohydrate active-transport system catalyzes the phosphorylation of incoming sugar substrates concomitantly with their translocation across the cell membrane. The phosphoryl group from phosphoenolpyruvate (PEP) is transferred to the phosphoryl carrier protein HPr by enzyme I. Phospho-HPr then transfers it to the PTS EIIA domain. In terms of biological role, P-Ser-HPr interacts with the catabolite control protein A (CcpA), forming a complex that binds to DNA at the catabolite response elements cre, operator sites preceding a large number of catabolite-regulated genes. Thus, P-Ser-HPr is a corepressor in carbon catabolite repression (CCR), a mechanism that allows bacteria to coordinate and optimize the utilization of available carbon sources. P-Ser-HPr also plays a role in inducer exclusion, in which it probably interacts with several non-PTS permeases and inhibits their transport activity. The protein is Phosphocarrier protein HPr (ptsH) of Mycoplasma capricolum subsp. capricolum (strain California kid / ATCC 27343 / NCTC 10154).